A 369-amino-acid chain; its full sequence is MRPETQSAVTQLDSTLTTIEKVMNPEDLESRVRELEQQASDPTLWDDPDTAQKVTTELSSVQAKLKKLSTLRQRIDDLPVMYELADEEGEDALALADEELAELTADVEALEVKTMLSGEYDSREAVINIRSGAGGVDAADWAEMLMRMYIRWAEKNDHKVDIYDISYAEEAGIKSATFVVHGEYMYGQLSVEQGAHRLVRISPFDNQGRRQTSFAEIEVLPVVEQTDHIDIPDSEVRVDVYRSSGPGGQSVNTTDSAVRLTHIPTGIVVTCQNEKSQIQNKASAMRVLQAKLLERKRQEERAELDALGAGGNASWGNQMRSYVLHPYQMVKDLRTNYEVNDPQKVLDGDIDGLLEAGIRWRMAEQQGQN.

Residue glutamine 249 is modified to N5-methylglutamine.

The protein belongs to the prokaryotic/mitochondrial release factor family. Methylated by PrmC. Methylation increases the termination efficiency of RF2.

It is found in the cytoplasm. Peptide chain release factor 2 directs the termination of translation in response to the peptide chain termination codons UGA and UAA. The polypeptide is Peptide chain release factor 2 (Corynebacterium diphtheriae (strain ATCC 700971 / NCTC 13129 / Biotype gravis)).